Here is a 308-residue protein sequence, read N- to C-terminus: Transcription initiation factor TFIID subunit 8 (308 aa).

The tract at residues 1–29 (MADTAAGPGGSGTRPGSKQSTNPADNYHL) is disordered. A2 bears the N-acetylalanine mark. Over residues 14–24 (RPGSKQSTNPA) the composition is skewed to polar residues. The region spanning 35–102 (LQVVVSSLLT…VTLVEMGFNV (68 aa)) is the Histone-fold domain. At T128 the chain carries Phosphothreonine. Positions 235 to 248 (MEETDSSEQEEQTD) are enriched in acidic residues. Residues 235 to 308 (MEETDSSEQE…PKIRRKKSLS (74 aa)) are disordered. The span at 268–281 (ASVLQQSSSLSGSR) shows a compositional bias: low complexity. A Phosphoserine modification is found at S269. The short motif at 292–305 (YLRPVKKPKIRRKK) is the Nuclear localization signal element. A compositionally biased stretch (basic residues) spans 295 to 308 (PVKKPKIRRKKSLS).

The protein belongs to the TAF8 family. Component of the TFIID basal transcription factor complex, composed of TATA-box-binding protein TBP, and a number of TBP-associated factors (TAFs), including TAF1, TAF2, TAF3, TAF4, TAF5, TAF6, TAF7, TAF8, TAF9, TAF10, TAF11, TAF12 and TAF13. Interacts with TBP, TAF1, TAF6, TAF10, TAF11 and TAF13. Component also of a small TAF complex (SMAT) containing TAF8, TAF10 and SUPT7L. Forms a heterodimer with TAF10. Interaction with TAF10 is mediated mainly via its histone fold domain while interaction with SUPT7L is via its C-terminal region. Low level of expression throughout the brain with slightly higher expression in the hippocampus.

The protein resides in the nucleus. Its subcellular location is the cytoplasm. The TFIID basal transcription factor complex plays a major role in the initiation of RNA polymerase II (Pol II)-dependent transcription. TFIID recognizes and binds promoters with or without a TATA box via its subunit TBP, a TATA-box-binding protein, and promotes assembly of the pre-initiation complex (PIC). The TFIID complex consists of TBP and TBP-associated factors (TAFs), including TAF1, TAF2, TAF3, TAF4, TAF5, TAF6, TAF7, TAF8, TAF9, TAF10, TAF11, TAF12 and TAF13. The TFIID complex structure can be divided into 3 modules TFIID-A, TFIID-B, and TFIID-C. TAF8 is involved in forming the TFIID-B module, together with TAF5. Mediates both basal and activator-dependent transcription. Plays a role in the differentiation of preadipocyte fibroblasts to adipocytes, however, does not seem to play a role in differentiation of myoblasts. Required for the integration of TAF10 in the TAF complex. May be important for survival of cells of the inner cell mass which constitute the pluripotent cell population of the early embryo. The polypeptide is Transcription initiation factor TFIID subunit 8 (Taf8) (Mus musculus (Mouse)).